The chain runs to 86 residues: YcgL domain-containing protein XCC3997 (86 aa).

A YcgL domain is found at 1–83; it reads MHAYVYKSQR…PKTVVLAGEC (83 aa).

This is YcgL domain-containing protein XCC3997 from Xanthomonas campestris pv. campestris (strain ATCC 33913 / DSM 3586 / NCPPB 528 / LMG 568 / P 25).